Reading from the N-terminus, the 591-residue chain is ATPase family AAA domain-containing protein 3A (591 aa).

The interval 1–52 (MSWLFGIKGPKGEGTGPPLPLPPAQPGAEGGGDRGAGDRPSPKDKWSNFDPT) is disordered. Ser2 carries the N-acetylserine modification. The tract at residues 2–49 (SWLFGIKGPKGEGTGPPLPLPPAQPGAEGGGDRGAGDRPSPKDKWSNF) is required for interaction with the inner surface of the mitochondrial outer membrane. The Mitochondrial intermembrane segment spans residues 2–245 (SWLFGIKGPK…FRAFVTDWDK (244 aa)). Over residues 31–47 (GGDRGAGDRPSPKDKWS) the composition is skewed to basic and acidic residues. Residues 55 to 216 (ERAAKAAREL…REQIRLKAAE (162 aa)) adopt a coiled-coil conformation. A helical membrane pass occupies residues 246–263 (VTATVAGLTLLAVGVYSA). Residues 264–586 (KNATSVAGRY…DSQTNKPPHP (323 aa)) lie on the Mitochondrial matrix side of the membrane. An S100B-binding region spans residues 289–304 (RISVLEALRHPIQVSR). 351–358 (GPPGTGKT) is an ATP binding site. N6-acetyllysine; alternate is present on Lys490. The residue at position 490 (Lys490) is an N6-succinyllysine; alternate. An N6-acetyllysine mark is found at Lys494 and Lys512. A disordered region spans residues 572 to 591 (KVERPDSQTNKPPHPSLLSC).

This sequence belongs to the AAA ATPase family. As to quaternary structure, can form homooligomers. Homodimer formation at the N-terminus may be regulated by ATP and is required for the interaction with the inner surface of the mitochondrial outer membrane and correct mitochondrial homeostasis. Interacts with components of the mitochondrial ribosome and with other proteins involved in mitochondrial RNA metabolism. May also interact with protein involved in lipid metabolism, including STARD9. May interact with FAM210A. Interacts with GADD45GIP1. Interacts with S100B in a Ca(+2)- and Zn(+2)-dependent manner; this interaction probably occurs in the cytosol prior to mitochondrial targeting. S100B could assist ATAD3A cytoplasmic processing, preventing aggregation and favoring mitochondrial localization. Interacts with HSP60/HSPD1. Interacts with CLPB. Interacts with EIF2AK3/PERK; ATAD3A and EIF2S1/eIF-2-alpha occupy a common binding site within the cytoplasmic loop of EIF2AK3/PERK, leading to prevent EIF2AK3/PERK association with its substrate EIF2S1/eIF-2-alpha. Expressed in heart, spleen, kidney, liver and at smaller levels, in lung and muscle (at protein level).

It is found in the mitochondrion inner membrane. The protein resides in the mitochondrion matrix. The protein localises to the mitochondrion nucleoid. The catalysed reaction is ATP + H2O = ADP + phosphate + H(+). Its function is as follows. Essential for mitochondrial network organization, mitochondrial metabolism and cell growth at organism and cellular level. May play an important role in mitochondrial protein synthesis. May also participate in mitochondrial DNA replication. May bind to mitochondrial DNA D-loops and contribute to nucleoid stability. Required for enhanced channeling of cholesterol for hormone-dependent steroidogenesis. Involved in mitochondrial-mediated antiviral innate immunity. Required to protect mitochondria from the PERK-mediated unfolded protein response: specifically inhibits the activity of EIF2AK3/PERK at mitochondria-endoplasmic reticulum contact sites, thereby providing a safe haven for mitochondrial protein translation during endoplasmic reticulum stress. Ability to inhibit EIF2AK3/PERK is independent of its ATPase activity. Also involved in the mitochondrial DNA damage response by promoting signaling between damaged genomes and the mitochondrial membrane, leading to activation of the integrated stress response (ISR). The chain is ATPase family AAA domain-containing protein 3A (Atad3a) from Mus musculus (Mouse).